Here is a 264-residue protein sequence, read N- to C-terminus: 3-methyl-2-oxobutanoate hydroxymethyltransferase (264 aa).

Residues D45 and D84 each contribute to the Mg(2+) site. Residues 45–46 (DS), D84, and K112 each bind 3-methyl-2-oxobutanoate. Mg(2+) is bound at residue E114. The active-site Proton acceptor is the E181.

Belongs to the PanB family. Homodecamer; pentamer of dimers. Mg(2+) is required as a cofactor.

Its subcellular location is the cytoplasm. The catalysed reaction is 3-methyl-2-oxobutanoate + (6R)-5,10-methylene-5,6,7,8-tetrahydrofolate + H2O = 2-dehydropantoate + (6S)-5,6,7,8-tetrahydrofolate. The protein operates within cofactor biosynthesis; (R)-pantothenate biosynthesis; (R)-pantoate from 3-methyl-2-oxobutanoate: step 1/2. Its function is as follows. Catalyzes the reversible reaction in which hydroxymethyl group from 5,10-methylenetetrahydrofolate is transferred onto alpha-ketoisovalerate to form ketopantoate. This chain is 3-methyl-2-oxobutanoate hydroxymethyltransferase, found in Aliivibrio fischeri (strain MJ11) (Vibrio fischeri).